We begin with the raw amino-acid sequence, 319 residues long: F-box only protein 8 (319 aa).

In terms of domain architecture, F-box spans 68-111 (FINLEMLPPELSFTILSYLNATDLCLASCVWQDLANDELLWQGL). The SEC7 domain maps to 146–276 (FNANPDEGVN…LILLSIDLTS (131 aa)).

In terms of biological role, may promote guanine-nucleotide exchange on an ARF. Promotes the activation of ARF through replacement of GDP with GTP (Potential). The protein is F-box only protein 8 (FBXO8) of Homo sapiens (Human).